Here is an 863-residue protein sequence, read N- to C-terminus: Scm-like with four MBT domains protein 1 (863 aa).

MBT repeat units follow at residues 20–120 (FSWE…LEAP), 128–232 (SDWS…LQPP), 242–346 (ADWQ…INPP), and 354–451 (FDWA…LSTP). Positions 638 to 773 (KKKNKRIGRP…SDGENKPPSP (136 aa)) are disordered. Over residues 660–679 (KTSKRRKRRKNIFVHKKKRS) the composition is skewed to basic residues. The span at 680–691 (SASVDNTPVGSP) shows a compositional bias: polar residues. Over residues 696–710 (GEDEDDADDGDDDSL) the composition is skewed to acidic residues. Residues S764 and S772 each carry the phosphoserine modification. The SAM domain maps to 793-861 (WSVADVVRFI…RIKFAFYEQF (69 aa)).

Interacts with MYOD1. Component of the SLC (SFMBT1-LSD1-CoREST) corepressor complex, which also contains KDM1A/LSD1 and RCOR1/CoREST. Interacts with KDM1A/LSD1 and RCOR1/CoREST. Interacts with MYOD1. Interacts with L3MBTL3. In terms of tissue distribution, highly expressed in the testis, low expression was detected in brain, kidney, heart and lung.

It localises to the nucleus. Histone-binding protein, which is part of various corepressor complexes. Mediates the recruitment of corepressor complexes to target genes, followed by chromatin compaction and repression of transcription. Plays a role during myogenesis: required for the maintenance of undifferentiated states of myogenic progenitor cells via interaction with MYOD1. Interaction with MYOD1 leads to the recruitment of associated corepressors and silencing of MYOD1 target genes. Part of the SLC complex in germ cells, where it may play a role during spermatogenesis. This is Scm-like with four MBT domains protein 1 (Sfmbt1) from Rattus norvegicus (Rat).